Consider the following 128-residue polypeptide: Ribonuclease pancreatic (128 aa).

Over residues 1-15 (SESSAKKFERQHMDS) the composition is skewed to basic and acidic residues. A disordered region spans residues 1 to 28 (SESSAKKFERQHMDSRGSPSTNPNYCNE). Residues lysine 7 and arginine 10 each contribute to the substrate site. Catalysis depends on histidine 12, which acts as the Proton acceptor. Disulfide bonds link cysteine 26–cysteine 84, cysteine 40–cysteine 95, cysteine 58–cysteine 110, and cysteine 65–cysteine 72. An N-linked (GlcNAc...) asparagine glycan is attached at asparagine 34. Residues 41–45 (KPVNT), lysine 66, and arginine 85 each bind substrate. Histidine 119 serves as the catalytic Proton donor.

It belongs to the pancreatic ribonuclease family. As to quaternary structure, monomer. Interacts with and forms tight 1:1 complexes with RNH1. Dimerization of two such complexes may occur. Interaction with RNH1 inhibits this protein. In terms of tissue distribution, pancreas.

Its subcellular location is the secreted. It carries out the reaction an [RNA] containing cytidine + H2O = an [RNA]-3'-cytidine-3'-phosphate + a 5'-hydroxy-ribonucleotide-3'-[RNA].. The enzyme catalyses an [RNA] containing uridine + H2O = an [RNA]-3'-uridine-3'-phosphate + a 5'-hydroxy-ribonucleotide-3'-[RNA].. Its function is as follows. Endonuclease that catalyzes the cleavage of RNA on the 3' side of pyrimidine nucleotides. Acts on single-stranded and double-stranded RNA. This is Ribonuclease pancreatic (RNASE1) from Myocastor coypus (Coypu).